The sequence spans 67 residues: Large ribosomal subunit protein uL29 (67 aa).

The protein belongs to the universal ribosomal protein uL29 family.

This Clostridium acetobutylicum (strain ATCC 824 / DSM 792 / JCM 1419 / IAM 19013 / LMG 5710 / NBRC 13948 / NRRL B-527 / VKM B-1787 / 2291 / W) protein is Large ribosomal subunit protein uL29.